The following is a 713-amino-acid chain: TWiK family of potassium channels protein 12 (713 aa).

The Cytoplasmic segment spans residues 1 to 15; sequence MTLFKKIQWFCNLIR. A helical transmembrane segment spans residues 16–36; the sequence is LRSYYKFLLLIAYTAFGAWLF. Residues asparagine 53, asparagine 77, and asparagine 98 are each glycosylated (N-linked (GlcNAc...) asparagine). Residues 112-132 constitute an intramembrane region (pore-forming); the sequence is WTWTGAMFYAGQLYTTIGYGY. The helical transmembrane segment at 142–162 threads the bilayer; the sequence is ICTIFYALFGIPCFLMYLKIE. At 163–242 the chain is on the cytoplasmic side; that stretch reads NAIEWKKDKQ…AEERKKKPFP (80 aa). Residues 243-263 traverse the membrane as a helical segment; the sequence is IPIAIIMLIIWICFSASMFCI. The segment at residues 267–287 is an intramembrane region (pore-forming); that stretch reads TWVFSSAVYFFIVSISTVGLG. Residues 298–318 traverse the membrane as a helical segment; it reads VFNFLLILVGLALLSMCFELI. The Cytoplasmic portion of the chain corresponds to 319-713; the sequence is TDRVAKWKQK…LSKRDASTMA (395 aa).

It belongs to the two pore domain potassium channel (TC 1.A.1.8) family.

It localises to the membrane. This is TWiK family of potassium channels protein 12 (twk-12) from Caenorhabditis elegans.